The following is a 21-amino-acid chain: Peptide PGLa-R2 (21 aa).

L21 carries the post-translational modification Leucine amide.

As to expression, expressed by the skin glands.

The protein localises to the secreted. Antimicrobial peptide. The protein is Peptide PGLa-R2 of Xenopus ruwenzoriensis (Uganda clawed frog).